The chain runs to 357 residues: Guanine nucleotide-binding protein alpha-16 subunit (357 aa).

G2 is lipidated: N-myristoyl glycine. The S-palmitoyl cysteine moiety is linked to residue C3. The G-alpha domain maps to 32–357 (RTIKLLLLGA…RDNLRTCGLY (326 aa)). The tract at residues 35–48 (KLLLLGAGESGKST) is G1 motif. Residues 40 to 47 (GAGESGKS), 175 to 181 (LRTRIKT), 200 to 204 (DVGGQ), 269 to 272 (NKKD), and A329 each bind GTP. Positions 47 and 181 each coordinate Mg(2+). The interval 173–181 (DILRTRIKT) is G2 motif. The G3 motif stretch occupies residues 196–205 (FLVFDVGGQR). The G4 motif stretch occupies residues 265–272 (ILFLNKKD). Positions 327–332 (TCATDT) are G5 motif.

It belongs to the G-alpha family. As to quaternary structure, g proteins are composed of 3 units; alpha, beta and gamma. The alpha chain contains the guanine nucleotide binding site.

Functionally, guanine nucleotide-binding proteins (G proteins) are involved as modulators or transducers in various transmembrane signaling systems. In the 1-cell embryo, probably together with goa-1, controls nuclear rotation and spindle elongation during mitosis. During the first embryonic cell divisons, plays a role in gpr-1/2 cortical localization and in the proper orientation of EMS blastomere mitotic spindle. This is Guanine nucleotide-binding protein alpha-16 subunit (gpa-16) from Caenorhabditis elegans.